The primary structure comprises 1262 residues: MGTGDFICISMTGGAPWGFRLQGGKEEKQPLQVAKIRSQSKASDSGLCVGDEVVSINGNPCADLTYPEVIKLMESITDSLHLLIKRPTSGTSEALDSETENTNHQHLPHGGPMESTTLQIQHAAKTQGKDFLLASVQTSAPRTEDQGNAWGYAECTTEDQVSQMPGSQEGHLVEEVILRKKPEAGQPGHVVELQLSLSKERQRCTSDPIVTLLGNEKFKSPDPDWGTQHGRTVHINSIPAPEKADTSLTSGTTVQTSSGRELTVIQGRDPGGTGLPQVEVILDCSDRLKAEECRLQAGRGCVASPVEGGRSEAPPSLVSFAVSSEGTEQGEDQRSGKDQGRPHKHRARHARLRRSESLSEKQVKEAKSKCKSIALLLTDAPNPNSKGVLMFKKRRRRARKYTLVSYGTGELEREEEEEDQEAGDKDEISDLAFLGTSESEVDEELLSDVDDNTQVVNFDWDSGLVDIEKRLNRGDKMEMLPDTTGKGALMFAKRRERMEQFTAQNEEEKTGGLAGGGSDALQTDGLRTMTSYQRKEESVRMQSSVSESSFQMGRSLGSVPQQNGFSGVSETAGPQRMIPMNRTAKPFLGSVNQTAAPFSPTQSVTSPIPDFPAPPPYSAVSPPPEAFSRGISSPVAGPAQPPPWPQPAPWSQPAFYDSSEQIASRDERIAVPAKRTGILQEAKRRGTTKPMFTFKETKVSPNPELLSLLQNAEGKRGTGAGGDSGPEEDYLSLGAEACNFMQSSAKQKTPPPVAPKPAVKTSSSSQPVAPVSPVWSPGVAPAQGPAFSTTNPPNPPQVTAVSSIKIAQPTCPPARPASALNLAGPFKGPQAAVVSHNYTPKPSAPTPLVNAAPAGAGGPSNELPGMSGKGAQLFAKRQSRMEKYVVDSDTVQAHTVRAQSPTPSLPASWKYSSNVRAPPPVAYNPIHSPSYPLAAIKSQPPGAQASKTSKKKGKKPLNTLDVMKHQPYQLNASLFTFQPPDSKDGLPQKSTVKVSSVAPAMKQALPPRQADIGSPTNAKASSVYSVPAYTSQPNFFAEATSPVSASPVPVSVPTSPKQETTSTSYFVAPRPKFSAKKSGVTVQENWRSLSLPGRAAPPIMSAPPWLCQPAYSYSSKPTLEQEKANKRPTPWEAAAKSPLGLVDEAFRPRNIEESIVANVVSAARRKVFAGSQEDWKERLSFVPQTQKTSMSFSERREYNVPSPVNSHVSSHSLYSSQLPYVCYRKESRNDLKAMSMDTRSEYCLPLGGYDYNPHPRGWRHQP.

The segment at 1 to 174 (MGTGDFICIS…PGSQEGHLVE (174 aa)) is interaction with VPS18. The PDZ domain maps to 6–88 (FICISMTGGA…SLHLLIKRPT (83 aa)). 2 stretches are compositionally biased toward polar residues: residues 89 to 105 (SGTSEALDSETENTNHQ) and 246 to 260 (TSLTSGTTVQTSSGR). 2 disordered regions span residues 89-114 (SGTSEALDSETENTNHQHLPHGGPME) and 239-276 (PAPEKADTSLTSGTTVQTSSGRELTVIQGRDPGGTGLP). Ser-304, Ser-323, and Ser-324 each carry phosphoserine. The interval 323–363 (SSEGTEQGEDQRSGKDQGRPHKHRARHARLRRSESLSEKQV) is disordered. Thr-327 is modified (phosphothreonine). Over residues 331–341 (EDQRSGKDQGR) the composition is skewed to basic and acidic residues. Positions 342-352 (PHKHRARHARL) are enriched in basic residues. Over residues 353-363 (RRSESLSEKQV) the composition is skewed to basic and acidic residues. A Nuclear localization signal motif is present at residues 392–400 (KKRRRRARK). Interaction with ACTN2 stretches follow at residues 477 to 658 (MEML…FYDS), 659 to 922 (SEQI…PPVA), and 899 to 1153 (QSPT…NIEE). Disordered regions lie at residues 503-576 (AQNE…GPQR) and 592-703 (NQTA…SPNP). Phosphoserine is present on residues Ser-518, Ser-543, Ser-544, Ser-546, and Ser-549. F-actin binding regions lie at residues 530–658 (TSYQ…FYDS) and 659–801 (SEQI…VTAV). Low complexity predominate over residues 540-552 (RMQSSVSESSFQM). The interval 554–560 (RSLGSVP) is interaction with YWHAB. Ser-558 carries the phosphoserine; by PKA modification. Composition is skewed to polar residues over residues 558-569 (SVPQQNGFSGVS) and 592-606 (NQTAAPFSPTQSVTS). Ser-599 bears the Phosphoserine mark. Positions 602 to 809 (QSVTSPIPDF…AVSSIKIAQP (208 aa)) are interaction with YWHAB. Thr-605 carries the post-translational modification Phosphothreonine; by PKA and CaMK2. Ser-606 is modified (phosphoserine). 2 stretches are compositionally biased toward pro residues: residues 609 to 625 (PDFPAPPPYSAVSPPPE) and 639 to 650 (AQPPPWPQPAPW). Residues 610–621 (DFPAPPPYSAVS) are interaction with BAG3. Residues 614 to 617 (PPPY) carry the PPPY motif motif. Residue Tyr-617 is modified to Phosphotyrosine. Ser-621 is subject to Phosphoserine. The segment at 659-914 (SEQIASRDER…LPASWKYSSN (256 aa)) is F-actin bundling activity. Residues Ser-700 and Ser-724 each carry the phosphoserine modification. Disordered stretches follow at residues 741-799 (MQSS…PQVT) and 833-868 (VVSHNYTPKPSAPTPLVNAAPAGAGGPSNELPGMSG). The actin binding stretch occupies residues 745–898 (AKQKTPPPVA…DTVQAHTVRA (154 aa)). Position 749 is a phosphothreonine (Thr-749). Residues 756 to 782 (KPAVKTSSSSQPVAPVSPVWSPGVAPA) show a composition bias toward low complexity. Residues Ser-772 and Ser-776 each carry the phosphoserine modification. A compositionally biased stretch (polar residues) spans 786–799 (AFSTTNPPNPPQVT). Residues 808 to 1153 (QPTCPPARPA…EAFRPRNIEE (346 aa)) are interaction with FLNC. Phosphoserine occurs at positions 900, 904, and 908. The disordered stretch occupies residues 933-957 (LAAIKSQPPGAQASKTSKKKGKKPL). The segment at 999-1018 (PAMKQALPPRQADIGSPTNA) is interaction with ZYX. Phosphoserine is present on residues Ser-1014, Ser-1055, and Ser-1090.

Belongs to the synaptopodin family. As to quaternary structure, may self-associate in muscle cells under oxidative stress. Binds F-actin. Interacts with ACTN2; ACTN2 is proposed to anchor SYOP2 at Z lines in mature myocytes. Interacts with AKAP6, PPP3CA and CAMK2A. Interacts (phosphorylated form) with YWHAB; YWHAB competes with ACTN2 for interaction with SYNPO2. Interacts with KPNA2; mediating nuclear import of SYNOP2; dependent on interaction with YWHAB. Interacts with IPO13; may be implicated in SYNOP2 nuclear import. Interacts with ZYX, FLNC, ILK. Interacts with BAG3 (via WW 1 domain). May associate with the CASA complex consisting of HSPA8, HSPB8 and BAG3. Interacts with VPS18. Phosphorylated by PKA, and by CaMK2 at multiple sites. Dephosphorylated by calcineurin at Ser-558 and Thr-605; abrogating interaction with YWHAB and impairing nuclear import.

The protein resides in the nucleus. It is found in the cytoplasm. Its subcellular location is the cytoskeleton. The protein localises to the myofibril. It localises to the sarcomere. The protein resides in the z line. It is found in the cell junction. Its subcellular location is the focal adhesion. Functionally, has an actin-binding and actin-bundling activity. Can induce the formation of F-actin networks. At the sarcomeric Z lines is proposed to act as adapter protein that links nascent myofibers to the sarcolemma via ZYX and may play a role in early assembly and stabilization of the Z lines. Involved in autophagosome formation. May play a role in chaperone-assisted selective autophagy (CASA) involved in Z lines maintenance in striated muscle under mechanical tension; may link the client-processing CASA chaperone machinery to a membrane-tethering and fusion complex providing autophagosome membranes. Involved in regulation of cell migration. May be a tumor suppressor. The chain is Synaptopodin-2 (Synpo2) from Rattus norvegicus (Rat).